A 143-amino-acid chain; its full sequence is Ribonuclease H (143 aa).

One can recognise an RNase H type-1 domain in the interval methionine 1–glutamate 140. The Mg(2+) site is built by aspartate 8, glutamate 46, aspartate 68, and aspartate 132.

The protein belongs to the RNase H family. As to quaternary structure, monomer. It depends on Mg(2+) as a cofactor.

Its subcellular location is the cytoplasm. It catalyses the reaction Endonucleolytic cleavage to 5'-phosphomonoester.. In terms of biological role, endonuclease that specifically degrades the RNA of RNA-DNA hybrids. This chain is Ribonuclease H, found in Legionella pneumophila (strain Lens).